Here is a 156-residue protein sequence, read N- to C-terminus: 17.4 kDa class I heat shock protein (156 aa).

Residues 42–156 form the sHSP domain; the sequence is DVAAFTNAKV…PEVKSVDISG (115 aa).

It belongs to the small heat shock protein (HSP20) family. In terms of assembly, may form oligomeric structures. Binds to AKR2A.

The protein resides in the cytoplasm. The protein is 17.4 kDa class I heat shock protein (HSP17.4A) of Arabidopsis thaliana (Mouse-ear cress).